Here is an 872-residue protein sequence, read N- to C-terminus: MKQLTSAQVRQMWLDFWKSKDHAIEPSANLVPVNDPTLLWINSGVATLKKYFDGSVIPENPRITNAQKAIRTNDIENVGKTARHHTMFEMLGNFSVGDYFRDDAIKWGFELLTSPEWFDLPKDKLYMTYYPDDKDSYNRWIECGVDPSHLIPIEDNFWEIGAGPSGPDTEIFFDRGEDFDPDHIGVRLLAEDIENDRYIEIWNIVLSQFNADPAVPRSEYKELPHKNIDTGAGLERLVAVMQGAKTNFETDLFMPIIREIEKLSGKTYDQDGDNMSFKVIADHIRSLSFAIGDGALPGNEGRGYVLRRLLRRAVMHGRRLGINEPFLYKLVPTVGKIMESYYPEVLEKQDFIEKIVKREEETFARTIDAGSNMLDQLLADLKAADKDTLEGKDIFRLYDTYGFPVELTEELAEDAGFKIDHQGFQAAMKEQQERARANVVKGGSMGMQNETLSNITEKSTFNYEKEALDSSLSVIIADNKRIEAVSEGQVLLVFSETPFYAEMGGQVADHGLIKNDKGDTVARVTDVQKAPNGQALHTVDVLGSLSVGTTYHLEIDHERRNRVMKNHTATHLLHAALHNVIGNHATQAGSLNEVEFLRFDFTHFEAVTPEELRQIEEEVNQQIWKAIPVTTIETDLDTAKEMGAMALFGEKYGKNVRVVSIGDYSVELCGGTHLKNTSEIGIFKIVKEEGIGSGTRRILAVTSKEAFEAYRQEEDILKEIATTLKAPQMNQVANKVASLQDQLHKLQKENAELKEKAAAVAAGDIFKDVKEVNGLRYIASQVEVADAGALRTFADKWKQKDYSDVLVLVASIGKKVNVLVASKSKDIHAGNLIKALAPIVSGRGGGKPDMAMAGGSDASAIKDLIAAVAENL.

4 residues coordinate Zn(2+): H567, H571, C669, and H673.

This sequence belongs to the class-II aminoacyl-tRNA synthetase family. It depends on Zn(2+) as a cofactor.

The protein resides in the cytoplasm. The catalysed reaction is tRNA(Ala) + L-alanine + ATP = L-alanyl-tRNA(Ala) + AMP + diphosphate. Its function is as follows. Catalyzes the attachment of alanine to tRNA(Ala) in a two-step reaction: alanine is first activated by ATP to form Ala-AMP and then transferred to the acceptor end of tRNA(Ala). Also edits incorrectly charged Ser-tRNA(Ala) and Gly-tRNA(Ala) via its editing domain. In Streptococcus mutans serotype c (strain ATCC 700610 / UA159), this protein is Alanine--tRNA ligase.